The primary structure comprises 115 residues: Holo-[acyl-carrier-protein] synthase (115 aa).

Mg(2+)-binding residues include D8 and E56.

Belongs to the P-Pant transferase superfamily. AcpS family. The cofactor is Mg(2+).

The protein localises to the cytoplasm. The enzyme catalyses apo-[ACP] + CoA = holo-[ACP] + adenosine 3',5'-bisphosphate + H(+). Its function is as follows. Transfers the 4'-phosphopantetheine moiety from coenzyme A to a Ser of acyl-carrier-protein. This is Holo-[acyl-carrier-protein] synthase from Ureaplasma parvum serovar 3 (strain ATCC 27815 / 27 / NCTC 11736).